Consider the following 376-residue polypeptide: Geranylgeranyl transferase type-1 subunit beta (376 aa).

PFTB repeat units follow at residues 128–179 (KRSL…YICG), 192–231 (TEKLLGYIMSQQCYNGAFGAHNEPHSGYTSCALSTLALLS), 259–301 (MKFE…HLLT), and 310–353 (TELV…ALIE). Residues 216 to 218 (HSG) and 280 to 283 (RENK) contribute to the geranylgeranyl diphosphate site. Residues Asp286 and Cys288 each contribute to the Zn(2+) site. Residue 289-292 (YAFW) participates in geranylgeranyl diphosphate binding. His341 is a Zn(2+) binding site.

It belongs to the protein prenyltransferase subunit beta family. In terms of assembly, heterodimer of an alpha (RAM2) and a beta (CDC43) subunit. Zn(2+) is required as a cofactor. The cofactor is Mg(2+).

The protein localises to the cytoplasm. The catalysed reaction is geranylgeranyl diphosphate + L-cysteinyl-[protein] = S-geranylgeranyl-L-cysteinyl-[protein] + diphosphate. Functionally, catalyzes the transfer of a geranyl-geranyl moiety from geranyl-geranyl diphosphate to proteins having the C-terminal sequence Cys-Ile-Ile-Leu or Cys-Val-Leu-Leu. Acts, among other substrates, on Rho1 and Rho2 and CDC42 proteins. Participates in a RAS-like C-terminal modification of proteins involved in nuclear division and bud growth. It is involved in bud positioning and cell polarity. The beta subunit is responsible for isoprenoid and peptide-binding. This chain is Geranylgeranyl transferase type-1 subunit beta (CDC43), found in Saccharomyces cerevisiae (strain ATCC 204508 / S288c) (Baker's yeast).